The chain runs to 144 residues: Large ribosomal subunit protein uL14 (144 aa).

Belongs to the universal ribosomal protein uL14 family. In terms of assembly, part of the 50S ribosomal subunit. Forms a cluster with proteins L3 and L24e, part of which may contact the 16S rRNA in 2 intersubunit bridges.

Functionally, binds to 23S rRNA. Forms part of two intersubunit bridges in the 70S ribosome. In Pyrobaculum islandicum (strain DSM 4184 / JCM 9189 / GEO3), this protein is Large ribosomal subunit protein uL14.